We begin with the raw amino-acid sequence, 447 residues long: Probable 3-deoxy-D-manno-octulosonic acid transferase, mitochondrial (447 aa).

A mitochondrion-targeting transit peptide spans 1-32; that stretch reads MKLGVFVYRLYRALTYGVSPLIHLHIRWRRLR. The active-site Proton acceptor is the glutamate 66. Residues 278-279, 320-322, and 347-350 contribute to the CMP site; these read PR, LGE, and NLSE.

The protein belongs to the glycosyltransferase group 1 family. Glycosyltransferase 30 subfamily. In terms of tissue distribution, expressed in leaves, stems and flowers.

The protein localises to the mitochondrion. It catalyses the reaction lipid IVA (E. coli) + CMP-3-deoxy-beta-D-manno-octulosonate = alpha-Kdo-(2-&gt;6)-lipid IVA (E. coli) + CMP + H(+). The catalysed reaction is alpha-Kdo-(2-&gt;6)-lipid IVA (E. coli) + CMP-3-deoxy-beta-D-manno-octulosonate = alpha-Kdo-(2-&gt;4)-alpha-Kdo-(2-&gt;6)-lipid IVA (E. coli) + CMP + H(+). Its pathway is glycolipid biosynthesis; KDO(2)-lipid A biosynthesis; KDO(2)-lipid A from CMP-3-deoxy-D-manno-octulosonate and lipid IV(A): step 1/4. The protein operates within glycolipid biosynthesis; KDO(2)-lipid A biosynthesis; KDO(2)-lipid A from CMP-3-deoxy-D-manno-octulosonate and lipid IV(A): step 2/4. In terms of biological role, involved in the biosynthesis of lipid A, a phosphorylated glycolipid that in bacteria anchors the lipopolysaccharide to the outer membrane of the cell. Catalyzes the transfer of two 3-deoxy-D-manno-octulosonate (Kdo) residues from CMP-Kdo to lipid IV(A), the tetraacyldisaccharide-1,4'-bisphosphate precursor of lipid A. Lipid A-like molecules in plants may serve as structural components of the outer membranes of mitochondria and/or chloroplasts, or may be involved in signal transduction or plant defense responses. The protein is Probable 3-deoxy-D-manno-octulosonic acid transferase, mitochondrial (KDTA) of Arabidopsis thaliana (Mouse-ear cress).